Here is a 779-residue protein sequence, read N- to C-terminus: MKIRYSVLSTFIISALYSQDTQANLKHQCLLRVPHFAGEEITADQLNMPIEIEADRAVINQPKEANYSGNVTIKQGNRSIFADNVRIEQQAPQHRKAFLIGRYQYQDNLIQAEGHNALLDLQSKDAEVANTTYQLVGRQGRGEAESGQFTPQTRRLKNASFTACLLNDNAWSIEANEMVQHIKAGYAEMWHARFKIFDVPIFYSPYLQFPLGDQRRSGILTPKLYHSTKDGLIYSQPFYWNIAPNMDATFTSNYYSRRGWQINPEFRYLTALGQGILAGEYLANDRLDTYRPKDMNDRRYLFHWRHNMSFLTDWHLDVDYTNVSDRRYFSDFDSSYGNVTDGYALQHFKLGYYQPQYNLSISGKDFHTFDSFDNVKPYRVLPQIDFNYYQDQFLKDSRFSFFAQIARFENDSKSMPNAWRFHAEPIINIPFVNHYGSLNFETKLYASHYQQQKGENQTAEEVKKQLTRIIPQVKLDFQTVLEADKSLFSGFKQILEPRLQYVYRPYRDQSEIGSKSHESVGLGYDSALLQTDYYSLFNDRRYSGLDRISSANLITAGASTRFFNKKTGEEVFNISVGQTYYLRPSRVDSLAIDSTADRSSSWSVESNWRFQPKWNWHASYQYDTRLHKSSLANMSLQYKPSTENVFQLNYRYVNEDYINQNLSFNRYGQDIKQIGGMIGWNLTDKVAIMASHYRDIALKKAVETQLSLNYNTCCWSANLYVARQLTTTPIGAKDSIRNFYYDNKFGINFELRFGHDYSSGMHKMLSKGILPYVEQYGIN.

An N-terminal signal peptide occupies residues 1–23 (MKIRYSVLSTFIISALYSQDTQA).

It belongs to the LptD family. Component of the lipopolysaccharide transport and assembly complex. Interacts with LptE and LptA.

The protein resides in the cell outer membrane. Its function is as follows. Together with LptE, is involved in the assembly of lipopolysaccharide (LPS) at the surface of the outer membrane. The polypeptide is LPS-assembly protein LptD (Haemophilus ducreyi (strain 35000HP / ATCC 700724)).